The following is a 2388-amino-acid chain: Highly reducing polyketide synthase Preu1 (2388 aa).

Residues 7–432 (NDDIAIVGLA…GTNAHVILDD (426 aa)) form the Ketosynthase family 3 (KS3) domain. Residues C180, H315, and H355 each act as for beta-ketoacyl synthase activity in the active site. A malonyl-CoA:ACP transacylase (MAT) domain region spans residues 549-875 (GFVFTGQGAQ…SSVLMRGEDG (327 aa)). The For malonyltransferase activity role is filled by S641. Residues 940–1074 (HDLLGAPTQD…GLGKIHYRPE (135 aa)) are N-terminal hotdog fold. Residues 940-1256 (HDLLGAPTQD…CRELPNGNSQ (317 aa)) form the PKS/mFAS DH domain. The interval 941-1251 (DLLGAPTQDS…VEGLRCRELP (311 aa)) is dehydratase (DH) domain. Residue H972 is the Proton acceptor; for dehydratase activity of the active site. The C-terminal hotdog fold stretch occupies residues 1102–1256 (TASISPVDFY…CRELPNGNSQ (155 aa)). The active-site Proton donor; for dehydratase activity is D1167. The tract at residues 1676–1983 (KLPSDARFTS…VPTGLGKAVL (308 aa)) is enoyl reductase (ER) domain. The segment at 2007–2191 (ATYVLAGGLG…AATSVDLGLM (185 aa)) is ketoreductase (KR) domain. Positions 2303–2380 (QANGIVLEAL…ALAEKISKAS (78 aa)) constitute a Carrier domain. S2340 is subject to O-(pantetheine 4'-phosphoryl)serine.

Pantetheine 4'-phosphate is required as a cofactor.

In terms of biological role, highly reducing polyketide synthase; part of a gene cluster that mediates the biosynthesis of a yet unidentified natural product. In Preussia isomera (Coprophilous fungus), this protein is Highly reducing polyketide synthase Preu1.